The primary structure comprises 222 residues: ATP-dependent dethiobiotin synthetase BioD (222 aa).

ATP is bound at residue D12–I17. T16 provides a ligand contact to Mg(2+). Residue K37 is part of the active site. T41 is a substrate binding site. Residues D49, E107–G110, G167–S168, and A197–G199 contribute to the ATP site. Residues D49 and E107 each contribute to the Mg(2+) site.

It belongs to the dethiobiotin synthetase family. In terms of assembly, homodimer. Mg(2+) serves as cofactor.

Its subcellular location is the cytoplasm. The enzyme catalyses (7R,8S)-7,8-diammoniononanoate + CO2 + ATP = (4R,5S)-dethiobiotin + ADP + phosphate + 3 H(+). It functions in the pathway cofactor biosynthesis; biotin biosynthesis; biotin from 7,8-diaminononanoate: step 1/2. In terms of biological role, catalyzes a mechanistically unusual reaction, the ATP-dependent insertion of CO2 between the N7 and N8 nitrogen atoms of 7,8-diaminopelargonic acid (DAPA, also called 7,8-diammoniononanoate) to form a ureido ring. The protein is ATP-dependent dethiobiotin synthetase BioD of Corynebacterium diphtheriae (strain ATCC 700971 / NCTC 13129 / Biotype gravis).